Consider the following 630-residue polypeptide: Angiotensin-converting enzyme-related protein (630 aa).

Positions 1-22 are cleaved as a signal peptide; the sequence is MGACNITVLLLVIMLWLPHGLS. The region spanning 28–615 is the Peptidase M2 domain; the sequence is SASVLEARRF…SRLGVPLGWG (588 aa). Disulfide bonds link cysteine 142/cysteine 150 and cysteine 344/cysteine 362. Histidine 375 provides a ligand contact to Zn(2+). The active-site Proton acceptor is the glutamate 376. Zn(2+)-binding residues include histidine 379 and glutamate 403. The Proton donor role is filled by histidine 505. A disulfide bond links cysteine 530 and cysteine 548.

This sequence belongs to the peptidase M2 family. It depends on Zn(2+) as a cofactor. In terms of processing, glycosylated.

It localises to the secreted. It is found in the extracellular space. It catalyses the reaction Release of a C-terminal dipeptide, oligopeptide-|-Xaa-Yaa, when Xaa is not Pro, and Yaa is neither Asp nor Glu. Thus, conversion of angiotensin I to angiotensin II, with increase in vasoconstrictor activity, but no action on angiotensin II.. Its activity is regulated as follows. Inhibited by captopril, lisinopril, trandolaprilat, fosinoprilat and enalaprilat. May be involved in the specific maturation or degradation of a number of bioactive peptides. May have a role in the specification of heart progenitors. The protein is Angiotensin-converting enzyme-related protein (Acer) of Drosophila melanogaster (Fruit fly).